Reading from the N-terminus, the 249-residue chain is Orotidine 5'-phosphate decarboxylase (249 aa).

Residues aspartate 18, lysine 40, 67-76 (DLKYHDIPNT), threonine 127, arginine 188, glutamine 197, glycine 217, and arginine 218 contribute to the substrate site. Catalysis depends on lysine 69, which acts as the Proton donor.

It belongs to the OMP decarboxylase family. Type 1 subfamily. As to quaternary structure, homodimer.

The catalysed reaction is orotidine 5'-phosphate + H(+) = UMP + CO2. It participates in pyrimidine metabolism; UMP biosynthesis via de novo pathway; UMP from orotate: step 2/2. Its function is as follows. Catalyzes the decarboxylation of orotidine 5'-monophosphate (OMP) to uridine 5'-monophosphate (UMP). In Baumannia cicadellinicola subsp. Homalodisca coagulata, this protein is Orotidine 5'-phosphate decarboxylase.